Here is a 73-residue protein sequence, read N- to C-terminus: Disintegrin lachesin (73 aa).

The Disintegrin domain occupies 1-73 (EAGEECDCGA…ADCPRNGYYG (73 aa)). Disulfide bonds link C6–C21, C8–C16, C15–C38, C29–C35, C34–C59, and C47–C66. Positions 51-53 (RGD) match the Cell attachment site motif. Positions 51–73 (RGDNPDDRCTGQSADCPRNGYYG) are disordered.

It belongs to the venom metalloproteinase (M12B) family. P-II subfamily. P-IIa sub-subfamily. As to quaternary structure, monomer (disintegrin). As to expression, expressed by the venom gland.

The protein localises to the secreted. Inhibits fibrinogen interaction with platelets. Acts by binding to alpha-IIb/beta-3 (ITGA2B/ITGB3) on the platelet surface and inhibits aggregation induced by ADP, thrombin, platelet-activating factor and collagen. This is Disintegrin lachesin from Lachesis muta muta (Bushmaster).